Consider the following 105-residue polypeptide: MARSVSSFKFLGASVFDALYVSISRRGYSGAPPAAVTASFGRPGAMGKVERRYAMKESSSSETRAYSSAWAPDPVTGYYRPENCGAEIDAADLREMMLNHRVRSQ.

Belongs to the LEA type 3 family.

In Gossypium hirsutum (Upland cotton), this protein is Late embryogenesis abundant protein Lea5-A (LEA5-A).